Reading from the N-terminus, the 369-residue chain is p21-activated protein kinase-interacting protein 1-like (369 aa).

5 WD repeats span residues 33–70, 73–111, 114–153, 195–233, and 236–278; these read AHTA…EHGA, QHNG…CLKS, AHKG…SAFI, TIEK…CLCE, and AREN…NNVP. Positions 311-369 are disordered; sequence ATSTEANESEKPSAVKKKKVCGMNKSGKLTKQRRRIVPAKRKLEAPLQKKKKKKQNSSE. Basic residues-rich tracts occupy residues 338–350 and 358–369; these read KLTK…VPAK and QKKKKKKQNSSE.

It localises to the nucleus. The protein localises to the nucleolus. Its function is as follows. Negatively regulates the PAK1 kinase. PAK1 is a member of the PAK kinase family, which has been shown to play a positive role in the regulation of signaling pathways involving MAPK8 and RELA. PAK1 exists as an inactive homodimer, which is activated by binding of small GTPases such as CDC42 to an N-terminal regulatory domain. PAK1IP1 also binds to the N-terminus of PAK1, and inhibits the specific activation of PAK1 by CDC42. May be involved in ribosomal large subunit assembly. This Gallus gallus (Chicken) protein is p21-activated protein kinase-interacting protein 1-like (PAK1IP1).